Here is a 729-residue protein sequence, read N- to C-terminus: Solute carrier family 15 member 2 (729 aa).

The segment at 1 to 34 (MNPFQKNESKETLFSPVSTEEMLPGPPSPPKKST) is disordered. The Cytoplasmic segment spans residues 1–57 (MNPFQKNESKETLFSPVSTEEMLPGPPSPPKKSTPKLFGSSYPLSIAFIVVNEFCER). The residue at position 9 (serine 9) is a Phosphoserine. A Phosphothreonine modification is found at threonine 12. At serine 28 the chain carries Phosphoserine. Residues 58–78 (FSYYGMKAVLTLYFLYFLHWN) traverse the membrane as a helical segment. The Extracellular segment spans residues 79–87 (EDTSTSVYH). Residues 88 to 108 (AFSSLCYFTPILGAAIADSWL) traverse the membrane as a helical segment. Residues 109 to 113 (GKFKT) lie on the Cytoplasmic side of the membrane. Residues 114-134 (IIYLSLVYVLGHVFKSLGAIP) form a helical membrane-spanning segment. The Extracellular portion of the chain corresponds to 135–139 (ILGGK). The chain crosses the membrane as a helical span at residues 140 to 160 (MLHTILSLVGLSLIALGTGGI). Residues 161–183 (KPCVAAFGGDQFEEEHAEARTRY) are Cytoplasmic-facing. A helical transmembrane segment spans residues 184-204 (FSVFYLSINAGSLISTFITPM). Over 205 to 217 (LRGDVKCFGEDCY) the chain is Extracellular. Residues 218 to 238 (ALAFGIPGLLMVLALVVFAMG) form a helical membrane-spanning segment. The Cytoplasmic segment spans residues 239–295 (SKMYRKPPPEGNIVAQVTKCIWFAICNRFRNRSEDIPKRQHWLDWAAEKYPKHLIMD). The helical transmembrane segment at 296–316 (VKALTRILFLYIPLPMFWALL) threads the bilayer. Over 317 to 343 (DQQGSRWTLQANKMDGDLGFFVLQPDQ) the chain is Extracellular. A helical membrane pass occupies residues 344-364 (MQVLNPFLVLVFIPLFDLVIY). Topologically, residues 365-380 (RLISKCGVNFSSLRKM) are cytoplasmic. The helical transmembrane segment at 381 to 401 (AVGMILACLAFAVAALVEIKI) threads the bilayer. Residues 402–611 (NGMIHPQPAS…PANKLSIAWQ (210 aa)) are Extracellular-facing. Residues 402–611 (NGMIHPQPAS…PANKLSIAWQ (210 aa)) are extracellular domain (ECD). N-linked (GlcNAc...) asparagine glycosylation is found at asparagine 448, asparagine 472, asparagine 528, and asparagine 587. The helical transmembrane segment at 612 to 632 (LPQYVLVTAAEVMFSVTGLEF) threads the bilayer. At 633–643 (SYSQAPSSMKS) the chain is on the cytoplasmic side. The chain crosses the membrane as a helical span at residues 644–664 (VLQAAWLLTVAVGNIIVLIVA). Residues 665–674 (QFSGLVQWAE) lie on the Extracellular side of the membrane. Residues 675 to 695 (FVLFSCLLLVVCLIFSVMGYY) form a helical membrane-spanning segment. Residues 696–729 (YVPLKSEGIHEATEKQIPHIQGNMINLETKNTRL) are Cytoplasmic-facing.

This sequence belongs to the major facilitator superfamily. Proton-dependent oligopeptide transporter (POT/PTR) (TC 2.A.17) family. As to quaternary structure, interacts (via extracellular domain region) with trypsin. Expressed in kidney brush border cells (at protein level). Highly expressed in macrophages.

The protein resides in the apical cell membrane. It localises to the cytoplasmic vesicle. It is found in the phagosome membrane. The protein localises to the cell membrane. It carries out the reaction N-acetyl-D-muramoyl-L-alanyl-D-isoglutamine(out) + 3 H(+)(out) = N-acetyl-D-muramoyl-L-alanyl-D-isoglutamine(in) + 3 H(+)(in). The enzyme catalyses a dipeptide(out) + 2 H(+)(out) = a dipeptide(in) + 2 H(+)(in). The catalysed reaction is glycyl-L-leucine(out) + 2 H(+)(out) = glycyl-L-leucine(in) + 2 H(+)(in). It catalyses the reaction glycyl-L-lysine(out) + 2 H(+)(out) = glycyl-L-lysine(in) + 2 H(+)(in). It carries out the reaction glycyl-L-glutamate(out) + 3 H(+)(out) = glycyl-L-glutamate(in) + 3 H(+)(in). The enzyme catalyses L-alanyl-L-alanine(out) + 2 H(+)(out) = L-alanyl-L-alanine(in) + 2 H(+)(in). The catalysed reaction is an L-amino acid tripeptide(out) + 2 H(+)(out) = an L-amino acid tripeptide(in) + 2 H(+)(in). It catalyses the reaction carnosine(out) + 2 H(+)(out) = carnosine(in) + 2 H(+)(in). Functionally, proton-coupled amino-acid transporter that transports oligopeptides of 2 to 4 amino acids with a preference for dipeptides. Transports neutral and anionic dipeptides with a proton to peptide stoichiometry of 2:1 or 3:1. In kidney, involved in the absorption of circulating di- and tripeptides from the glomerular filtrate. Can also transport beta-lactam antibiotics, such as the aminocephalosporin cefadroxil, and other antiviral and anticancer drugs. Transports the dipeptide-like aminopeptidase inhibitor bestatin. Also able to transport carnosine. Involved in innate immunity by promoting the detection of microbial pathogens by NOD-like receptors (NLRs). Mediates transport of bacterial peptidoglycans across the plasma membrane or, in macrophages, the phagosome membrane: catalyzes the transport of certain bacterial peptidoglycans, such as muramyl dipeptide (MDP), the NOD2 ligand. This is Solute carrier family 15 member 2 from Mus musculus (Mouse).